The chain runs to 553 residues: Keratin, type II cytoskeletal 6A (553 aa).

Polar residues predominate over residues 1–20 (MSTKTTIKSQTSHRGYSASS). Positions 1–21 (MSTKTTIKSQTSHRGYSASSA) are disordered. The segment at 1–151 (MSTKTTIKSQ…DPTIQRVRTE (151 aa)) is head. Residues 152-187 (EREQIKTLNNKFASFIDKVRFLEQQNKVLDTKWALL) are coil 1A. An IF rod domain is found at 152–465 (EREQIKTLNN…KLLEGEECRL (314 aa)). Residues 188–206 (QEQGTKTVRQNLEPMFEQY) are linker 1. The segment at 207–298 (ISNLRRQLDS…ALYEAELSQM (92 aa)) is coil 1B. The interval 299-322 (QTHISDTSVVLSMDNNRSLDLDSI) is linker 12. The interval 323 to 461 (IAEVKAQYED…ATYRKLLEGE (139 aa)) is coil 2. Residues 462–553 (ECRLNGEGVG…TSSSKKSYRQ (92 aa)) form a tail region. The tract at residues 528 to 553 (LSSSGGLSSSTIKYTTTSSSKKSYRQ) is disordered. Residues 531–553 (SGGLSSSTIKYTTTSSSKKSYRQ) are compositionally biased toward low complexity.

The protein belongs to the intermediate filament family. As to quaternary structure, heterodimer of a type I and a type II keratin. KRT6 isomers associate with KRT16 and/or KRT17. Interacts with TCHP. Predominates in the adult trunk skin, tongue, trachea/esophagus and eye. In adult skin, localization is restricted to hair follicles, where it is localized predominantly in the outer root sheath.

Functionally, epidermis-specific type I keratin involved in wound healing. Involved in the activation of follicular keratinocytes after wounding, while it does not play a major role in keratinocyte proliferation or migration. Participates in the regulation of epithelial migration by inhibiting the activity of SRC during wound repair. The chain is Keratin, type II cytoskeletal 6A (Krt6a) from Mus musculus (Mouse).